Here is a 539-residue protein sequence, read N- to C-terminus: Chaperonin GroEL (539 aa).

Residues 29–32 (TLGP), 86–90 (DGTTT), Gly-413, 476–478 (NAA), and Asp-492 contribute to the ATP site.

Belongs to the chaperonin (HSP60) family. Forms a cylinder of 14 subunits composed of two heptameric rings stacked back-to-back. Interacts with the co-chaperonin GroES.

The protein localises to the cytoplasm. It carries out the reaction ATP + H2O + a folded polypeptide = ADP + phosphate + an unfolded polypeptide.. In terms of biological role, together with its co-chaperonin GroES, plays an essential role in assisting protein folding. The GroEL-GroES system forms a nano-cage that allows encapsulation of the non-native substrate proteins and provides a physical environment optimized to promote and accelerate protein folding. The chain is Chaperonin GroEL from Macrococcus caseolyticus (strain JCSC5402) (Macrococcoides caseolyticum).